We begin with the raw amino-acid sequence, 940 residues long: Isoleucine--tRNA ligase (940 aa).

The 'HIGH' region motif lies at 58-68 (PYANGSIHIGH). Glutamate 564 serves as a coordination point for L-isoleucyl-5'-AMP. The short motif at 605 to 609 (KMSKS) is the 'KMSKS' region element. An ATP-binding site is contributed by lysine 608. 4 residues coordinate Zn(2+): cysteine 903, cysteine 906, cysteine 923, and cysteine 926.

This sequence belongs to the class-I aminoacyl-tRNA synthetase family. IleS type 1 subfamily. In terms of assembly, monomer. Zn(2+) serves as cofactor.

The protein resides in the cytoplasm. The enzyme catalyses tRNA(Ile) + L-isoleucine + ATP = L-isoleucyl-tRNA(Ile) + AMP + diphosphate. Catalyzes the attachment of isoleucine to tRNA(Ile). As IleRS can inadvertently accommodate and process structurally similar amino acids such as valine, to avoid such errors it has two additional distinct tRNA(Ile)-dependent editing activities. One activity is designated as 'pretransfer' editing and involves the hydrolysis of activated Val-AMP. The other activity is designated 'posttransfer' editing and involves deacylation of mischarged Val-tRNA(Ile). This chain is Isoleucine--tRNA ligase, found in Shewanella sp. (strain MR-7).